Here is a 151-residue protein sequence, read N- to C-terminus: UPF0178 protein VSAL_I0701 (151 aa).

This sequence belongs to the UPF0178 family.

The polypeptide is UPF0178 protein VSAL_I0701 (Aliivibrio salmonicida (strain LFI1238) (Vibrio salmonicida (strain LFI1238))).